A 122-amino-acid polypeptide reads, in one-letter code: Large ribosomal subunit protein bL12 (122 aa).

Belongs to the bacterial ribosomal protein bL12 family. Homodimer. Part of the ribosomal stalk of the 50S ribosomal subunit. Forms a multimeric L10(L12)X complex, where L10 forms an elongated spine to which 2 to 4 L12 dimers bind in a sequential fashion. Binds GTP-bound translation factors.

Forms part of the ribosomal stalk which helps the ribosome interact with GTP-bound translation factors. Is thus essential for accurate translation. This is Large ribosomal subunit protein bL12 from Mycoplasma pneumoniae (strain ATCC 29342 / M129 / Subtype 1) (Mycoplasmoides pneumoniae).